A 364-amino-acid polypeptide reads, in one-letter code: DNA replication and repair protein RecF (364 aa).

ATP is bound at residue 30–37 (GNNGQGKT).

It belongs to the RecF family.

Its subcellular location is the cytoplasm. Functionally, the RecF protein is involved in DNA metabolism; it is required for DNA replication and normal SOS inducibility. RecF binds preferentially to single-stranded, linear DNA. It also seems to bind ATP. The polypeptide is DNA replication and repair protein RecF (Citrifermentans bemidjiense (strain ATCC BAA-1014 / DSM 16622 / JCM 12645 / Bem) (Geobacter bemidjiensis)).